A 495-amino-acid polypeptide reads, in one-letter code: Aspartyl/glutamyl-tRNA(Asn/Gln) amidotransferase subunit B (495 aa).

This sequence belongs to the GatB/GatE family. GatB subfamily. Heterotrimer of A, B and C subunits.

It carries out the reaction L-glutamyl-tRNA(Gln) + L-glutamine + ATP + H2O = L-glutaminyl-tRNA(Gln) + L-glutamate + ADP + phosphate + H(+). It catalyses the reaction L-aspartyl-tRNA(Asn) + L-glutamine + ATP + H2O = L-asparaginyl-tRNA(Asn) + L-glutamate + ADP + phosphate + 2 H(+). Its function is as follows. Allows the formation of correctly charged Asn-tRNA(Asn) or Gln-tRNA(Gln) through the transamidation of misacylated Asp-tRNA(Asn) or Glu-tRNA(Gln) in organisms which lack either or both of asparaginyl-tRNA or glutaminyl-tRNA synthetases. The reaction takes place in the presence of glutamine and ATP through an activated phospho-Asp-tRNA(Asn) or phospho-Glu-tRNA(Gln). In Gloeothece citriformis (strain PCC 7424) (Cyanothece sp. (strain PCC 7424)), this protein is Aspartyl/glutamyl-tRNA(Asn/Gln) amidotransferase subunit B.